Consider the following 431-residue polypeptide: Adenylosuccinate lyase (431 aa).

Residues arginine 4–tyrosine 5, asparagine 67–aspartate 69, and threonine 93–serine 94 contribute to the N(6)-(1,2-dicarboxyethyl)-AMP site. Histidine 141 (proton donor/acceptor) is an active-site residue. Glutamine 212 serves as a coordination point for N(6)-(1,2-dicarboxyethyl)-AMP. Serine 262 acts as the Proton donor/acceptor in catalysis. Residues serine 263, lysine 268–asparagine 270, and serine 307–tyrosine 311 each bind N(6)-(1,2-dicarboxyethyl)-AMP.

This sequence belongs to the lyase 1 family. Adenylosuccinate lyase subfamily. As to quaternary structure, homotetramer. Residues from neighboring subunits contribute catalytic and substrate-binding residues to each active site.

It catalyses the reaction N(6)-(1,2-dicarboxyethyl)-AMP = fumarate + AMP. The enzyme catalyses (2S)-2-[5-amino-1-(5-phospho-beta-D-ribosyl)imidazole-4-carboxamido]succinate = 5-amino-1-(5-phospho-beta-D-ribosyl)imidazole-4-carboxamide + fumarate. Its pathway is purine metabolism; AMP biosynthesis via de novo pathway; AMP from IMP: step 2/2. The protein operates within purine metabolism; IMP biosynthesis via de novo pathway; 5-amino-1-(5-phospho-D-ribosyl)imidazole-4-carboxamide from 5-amino-1-(5-phospho-D-ribosyl)imidazole-4-carboxylate: step 2/2. Catalyzes two reactions in de novo purine nucleotide biosynthesis. Catalyzes the breakdown of 5-aminoimidazole- (N-succinylocarboxamide) ribotide (SAICAR or 2-[5-amino-1-(5-phospho-beta-D-ribosyl)imidazole-4-carboxamido]succinate) to 5-aminoimidazole-4-carboxamide ribotide (AICAR or 5-amino-1-(5-phospho-beta-D-ribosyl)imidazole-4-carboxamide) and fumarate, and of adenylosuccinate (ADS or N(6)-(1,2-dicarboxyethyl)-AMP) to adenosine monophosphate (AMP) and fumarate. In Thermotoga maritima (strain ATCC 43589 / DSM 3109 / JCM 10099 / NBRC 100826 / MSB8), this protein is Adenylosuccinate lyase (purB).